The chain runs to 287 residues: 2-dehydro-3-deoxyphosphooctonate aldolase (287 aa).

Belongs to the KdsA family.

It is found in the cytoplasm. It catalyses the reaction D-arabinose 5-phosphate + phosphoenolpyruvate + H2O = 3-deoxy-alpha-D-manno-2-octulosonate-8-phosphate + phosphate. Its pathway is carbohydrate biosynthesis; 3-deoxy-D-manno-octulosonate biosynthesis; 3-deoxy-D-manno-octulosonate from D-ribulose 5-phosphate: step 2/3. The protein operates within bacterial outer membrane biogenesis; lipopolysaccharide biosynthesis. The polypeptide is 2-dehydro-3-deoxyphosphooctonate aldolase (Nitrobacter hamburgensis (strain DSM 10229 / NCIMB 13809 / X14)).